Here is a 417-residue protein sequence, read N- to C-terminus: MDFAPELITIGQKAKDAARKLAYAGTAAKNKALLAMAEALLNHEQKILEANRKDVEAAIQKGTKKSLVNRLALTSEGIRQMSDALKEVVNLGDPVGEGEFWTRPNGLRIQRTRVPLGVVAMIYEARPNVTVDAAALCLKSGNAVILRGGSEAIESNKILSKVIAGAAESQGMPTACIQLLENTNRQWVQQLMKMNGYVDVIIPRGGAGLIETVVKEATVPVIETGTGVCHAYVDGEADLAKGVSIVFNAKTQKPGVCNALEAVLVNEAVAQEFLPLLGEKFRDYGVEIRGCEKTCAILPYAAKATEEDWGTEYLDLIISAKVVQGVDEAMDHIYQYGTKHSETIITENYTTAQRFLNEVDAAAVYVNASTRFTDGGRFGFGAEIGISTQKLHARGPMGLQALTTMKYMVYGEDHIVT.

The protein belongs to the gamma-glutamyl phosphate reductase family.

It localises to the cytoplasm. The enzyme catalyses L-glutamate 5-semialdehyde + phosphate + NADP(+) = L-glutamyl 5-phosphate + NADPH + H(+). It participates in amino-acid biosynthesis; L-proline biosynthesis; L-glutamate 5-semialdehyde from L-glutamate: step 2/2. In terms of biological role, catalyzes the NADPH-dependent reduction of L-glutamate 5-phosphate into L-glutamate 5-semialdehyde and phosphate. The product spontaneously undergoes cyclization to form 1-pyrroline-5-carboxylate. The polypeptide is Gamma-glutamyl phosphate reductase (Desulfitobacterium hafniense (strain Y51)).